The following is a 1025-amino-acid chain: Multidrug resistance protein MdtC (1025 aa).

The next 12 membrane-spanning stretches (helical) occupy residues 3–23, 333–353, 360–380, 387–407, 431–451, 463–483, 528–548, 853–873, 875–895, 897–917, 953–973, and 984–1004; these read FFALFIYRPVATILLSVAITL, EVEQTLIISVALVILVVFLFL, IIPAVVVPVSLIGTFAAMYLC, LSLMALTIATGFVVDDAIVVL, VGFTVLSMSLSLVAVFLPLLL, FAVTLSVAIGISLLVSLTLTP, LVGVVLLGTIALNIWLYISIP, VILIIAAIATVYIVLGILYES, VHPLTILSTLPSAGVGALLAL, LFNAPFSLIALIGIMLLIGIV, PIMMTTLAALFGALPLVLSGG, and ITIVGGLVMSQLLTLYTTPVV.

Belongs to the resistance-nodulation-cell division (RND) (TC 2.A.6) family. MdtC subfamily. Part of a tripartite efflux system composed of MdtA, MdtB and MdtC. MdtC forms a heteromultimer with MdtB.

It localises to the cell inner membrane. Functionally, the MdtABC tripartite complex confers resistance against novobiocin and deoxycholate. This Escherichia coli O8 (strain IAI1) protein is Multidrug resistance protein MdtC.